The primary structure comprises 396 residues: S-adenosylmethionine synthase (396 aa).

H14 is an ATP binding site. D16 lines the Mg(2+) pocket. E42 is a binding site for K(+). Residues E55 and Q98 each coordinate L-methionine. Residues 98–108 (QSPDIAQGVHG) form a flexible loop region. ATP contacts are provided by residues 167–169 (DAK), 234–235 (RF), D243, 249–250 (RK), S266, and K270. L-methionine is bound at residue D243. K274 provides a ligand contact to L-methionine.

The protein belongs to the AdoMet synthase family. In terms of assembly, homotetramer; dimer of dimers. Mg(2+) is required as a cofactor. The cofactor is K(+).

The protein localises to the cytoplasm. It catalyses the reaction L-methionine + ATP + H2O = S-adenosyl-L-methionine + phosphate + diphosphate. It functions in the pathway amino-acid biosynthesis; S-adenosyl-L-methionine biosynthesis; S-adenosyl-L-methionine from L-methionine: step 1/1. Its function is as follows. Catalyzes the formation of S-adenosylmethionine (AdoMet) from methionine and ATP. The overall synthetic reaction is composed of two sequential steps, AdoMet formation and the subsequent tripolyphosphate hydrolysis which occurs prior to release of AdoMet from the enzyme. The chain is S-adenosylmethionine synthase from Treponema pallidum (strain Nichols).